The following is a 660-amino-acid chain: tRNA 5-methylaminomethyl-2-thiouridine biosynthesis bifunctional protein MnmC (660 aa).

The segment at 1–242 is tRNA (mnm(5)s(2)U34)-methyltransferase; that stretch reads MTDRIVPATL…KRAMLVGEFA (242 aa). The FAD-dependent cmnm(5)s(2)U34 oxidoreductase stretch occupies residues 266–660; it reads IGAGLAGCAV…VRALRHGRVA (395 aa).

This sequence in the N-terminal section; belongs to the methyltransferase superfamily. tRNA (mnm(5)s(2)U34)-methyltransferase family. In the C-terminal section; belongs to the DAO family. It depends on FAD as a cofactor.

The protein resides in the cytoplasm. It catalyses the reaction 5-aminomethyl-2-thiouridine(34) in tRNA + S-adenosyl-L-methionine = 5-methylaminomethyl-2-thiouridine(34) in tRNA + S-adenosyl-L-homocysteine + H(+). Functionally, catalyzes the last two steps in the biosynthesis of 5-methylaminomethyl-2-thiouridine (mnm(5)s(2)U) at the wobble position (U34) in tRNA. Catalyzes the FAD-dependent demodification of cmnm(5)s(2)U34 to nm(5)s(2)U34, followed by the transfer of a methyl group from S-adenosyl-L-methionine to nm(5)s(2)U34, to form mnm(5)s(2)U34. The polypeptide is tRNA 5-methylaminomethyl-2-thiouridine biosynthesis bifunctional protein MnmC (Burkholderia pseudomallei (strain 1710b)).